The primary structure comprises 464 residues: UDP-N-acetylmuramoylalanine--D-glutamate ligase (464 aa).

Position 112–118 (112–118 (GTDGKTT)) interacts with ATP.

It belongs to the MurCDEF family.

The protein resides in the cytoplasm. The enzyme catalyses UDP-N-acetyl-alpha-D-muramoyl-L-alanine + D-glutamate + ATP = UDP-N-acetyl-alpha-D-muramoyl-L-alanyl-D-glutamate + ADP + phosphate + H(+). It participates in cell wall biogenesis; peptidoglycan biosynthesis. Cell wall formation. Catalyzes the addition of glutamate to the nucleotide precursor UDP-N-acetylmuramoyl-L-alanine (UMA). This chain is UDP-N-acetylmuramoylalanine--D-glutamate ligase, found in Pelodictyon phaeoclathratiforme (strain DSM 5477 / BU-1).